Reading from the N-terminus, the 487-residue chain is MPKVKALQCALALEIRSVTCPGVVLKDKEDIYLSICVFGQYKKTQCVPANFPLVFNARMVFEKVFPEAVDPGDVVAQLEYDTALFELIQLVPPVGETLSTYDENTRDFMFPGPNQISGHHDSNRQVTMRRISGLRGIAPKLEFSTTSVITECLISSRKCRTQDKFVYHTAPVEKPHSRLQNRTSRSQKKKSKSPERNKYCINAKNYEQPTTSKSHSPSPYTKRRMCELSEDTRRRLAHLNLGPYEFKKETDKPPFVIRHVDPPSPRADALFGSPGRDCERDGWSRLHNDHSHLGCYRPKDYKVIRTPHGRDFDESLERCEDYLSSRSCSKPQHSARTLLVHSAPSTMPKHSPSPVLNRASLRERFHSDWCSPSNCDEIHDRVKNVLKSHQAHQRHLYDERDPEKEDELELKRGLLYRDSAYDSDPEYSSFQRPRGTLHLDDGEYWSNRAASYKGKSHRPIFENSMDKIYRNLYKKACSSVSHTQESF.

The N-terminal stretch at 1-17 is a signal peptide; sequence MPKVKALQCALALEIRS. Positions 170-221 are disordered; it reads APVEKPHSRLQNRTSRSQKKKSKSPERNKYCINAKNYEQPTTSKSHSPSPYT. N181 carries N-linked (GlcNAc...) asparagine glycosylation. Polar residues predominate over residues 205 to 219; it reads NYEQPTTSKSHSPSP. Phosphoserine occurs at positions 216 and 218. Residue K247 forms a Glycyl lysine isopeptide (Lys-Gly) (interchain with G-Cter in SUMO2) linkage. Phosphoserine is present on residues S264, S273, S324, S342, S345, S353, S423, S464, and S486.

This sequence belongs to the SPATA6 family. In terms of assembly, interacts with MYL6.

It localises to the secreted. It is found in the cell projection. The protein localises to the cilium. Its subcellular location is the flagellum. Required for formation of the sperm connecting piece during spermiogenesis. Sperm connecting piece is essential for linking the developing flagellum to the head during late spermiogenesis. May be involved in myosin-based microfilament transport through interaction with myosin subunits. The protein is Spermatogenesis-associated protein 6 (SPATA6) of Bos taurus (Bovine).